Reading from the N-terminus, the 146-residue chain is Large ribosomal subunit protein uL15 (146 aa).

The tract at residues 1-61 (MELNSLKPAA…GGQMPMHRRL (61 aa)) is disordered. Residues 30–39 (TATKGHKGQK) are compositionally biased toward basic residues.

This sequence belongs to the universal ribosomal protein uL15 family. In terms of assembly, part of the 50S ribosomal subunit.

Binds to the 23S rRNA. This chain is Large ribosomal subunit protein uL15, found in Geotalea uraniireducens (strain Rf4) (Geobacter uraniireducens).